Reading from the N-terminus, the 423-residue chain is UDP-N-acetylglucosamine 1-carboxyvinyltransferase 1 (423 aa).

Residue 23-24 participates in phosphoenolpyruvate binding; that stretch reads KN. Residue Arg96 coordinates UDP-N-acetyl-alpha-D-glucosamine. Cys120 (proton donor) is an active-site residue. At Cys120 the chain carries 2-(S-cysteinyl)pyruvic acid O-phosphothioketal. UDP-N-acetyl-alpha-D-glucosamine contacts are provided by residues 125–129, Asp309, and Val331; that span reads RPIDL.

It belongs to the EPSP synthase family. MurA subfamily.

Its subcellular location is the cytoplasm. The catalysed reaction is phosphoenolpyruvate + UDP-N-acetyl-alpha-D-glucosamine = UDP-N-acetyl-3-O-(1-carboxyvinyl)-alpha-D-glucosamine + phosphate. It functions in the pathway cell wall biogenesis; peptidoglycan biosynthesis. Functionally, cell wall formation. Adds enolpyruvyl to UDP-N-acetylglucosamine. This is UDP-N-acetylglucosamine 1-carboxyvinyltransferase 1 from Streptococcus thermophilus (strain CNRZ 1066).